The following is a 291-amino-acid chain: Bis(5'-nucleosyl)-tetraphosphatase, symmetrical (291 aa).

It belongs to the Ap4A hydrolase family.

The catalysed reaction is P(1),P(4)-bis(5'-adenosyl) tetraphosphate + H2O = 2 ADP + 2 H(+). Its function is as follows. Hydrolyzes diadenosine 5',5'''-P1,P4-tetraphosphate to yield ADP. This chain is Bis(5'-nucleosyl)-tetraphosphatase, symmetrical, found in Pseudomonas syringae pv. syringae (strain B728a).